The primary structure comprises 191 residues: Salivary lipocalin (191 aa).

The first 16 residues, 1-16, serve as a signal peptide directing secretion; it reads MKLLLLLCLGLTLASS. N-linked (GlcNAc...) asparagine glycosylation occurs at Asn-69. Cysteines 84 and 176 form a disulfide.

The protein belongs to the calycin superfamily. Lipocalin family. Homodimer. As to expression, in the submaxillary salivary glands of mature male pigs, but absent from that of females. Expression was much lower in submaxillary glands of castrated male pigs than in sexually mature individuals.

The protein resides in the secreted. Its function is as follows. Binds pheromones, the pheromones are released from the saliva of males and affect the sexual behavior of females. This Sus scrofa (Pig) protein is Salivary lipocalin (SAL1).